The primary structure comprises 339 residues: DNA-directed RNA polymerase subunit alpha (339 aa).

Residues 1-233 form an alpha N-terminal domain (alpha-NTD) region; that stretch reads MVREEVAGST…DLFLPFLHAE (233 aa). Residues 266 to 339 form an alpha C-terminal domain (alpha-CTD) region; that stretch reads GIPLNCIFID…IDLLKNKLSF (74 aa).

Belongs to the RNA polymerase alpha chain family. As to quaternary structure, in plastids the minimal PEP RNA polymerase catalytic core is composed of four subunits: alpha, beta, beta', and beta''. When a (nuclear-encoded) sigma factor is associated with the core the holoenzyme is formed, which can initiate transcription.

It localises to the plastid. The protein localises to the chloroplast. It carries out the reaction RNA(n) + a ribonucleoside 5'-triphosphate = RNA(n+1) + diphosphate. Functionally, DNA-dependent RNA polymerase catalyzes the transcription of DNA into RNA using the four ribonucleoside triphosphates as substrates. In Aegilops speltoides (Goatgrass), this protein is DNA-directed RNA polymerase subunit alpha.